The chain runs to 312 residues: tRNA dimethylallyltransferase (312 aa).

19–26 (GPSGSGKS) provides a ligand contact to ATP. Residue 21-26 (SGSGKS) participates in substrate binding. The interaction with substrate tRNA stretch occupies residues 44-47 (DSLS).

Belongs to the IPP transferase family. Monomer. Mg(2+) is required as a cofactor.

The catalysed reaction is adenosine(37) in tRNA + dimethylallyl diphosphate = N(6)-dimethylallyladenosine(37) in tRNA + diphosphate. Its function is as follows. Catalyzes the transfer of a dimethylallyl group onto the adenine at position 37 in tRNAs that read codons beginning with uridine, leading to the formation of N6-(dimethylallyl)adenosine (i(6)A). This is tRNA dimethylallyltransferase from Helicobacter pylori (strain J99 / ATCC 700824) (Campylobacter pylori J99).